Reading from the N-terminus, the 364-residue chain is Glycerophosphodiester phosphodiesterase (364 aa).

Residues 1–18 form the signal peptide; sequence MKLKTLALSLLAAGVLAG. Residue cysteine 19 is the site of N-palmitoyl cysteine attachment. Residue cysteine 19 is the site of S-diacylglycerol cysteine attachment. Residues 35-360 form the GP-PDE domain; sequence KIIIAHRGAS…DFPDTGVEFL (326 aa). The active-site Proton acceptor is histidine 40. Ca(2+) is bound by residues glutamate 67 and aspartate 69. Histidine 82 serves as the catalytic Proton donor. Residue glutamate 175 coordinates Ca(2+).

The protein belongs to the glycerophosphoryl diester phosphodiesterase family. Ca(2+) is required as a cofactor. Contains both ester- and amide-linked fatty acids.

The protein localises to the cell outer membrane. The enzyme catalyses a sn-glycero-3-phosphodiester + H2O = an alcohol + sn-glycerol 3-phosphate + H(+). Glycerophosphodiester phosphodiesterase hydrolyzes glycerophosphodiesters into glycerol-3-phosphate (G3P) and the corresponding alcohol. Has a specific affinity for human immunoglobulin D myeloma protein. The sequence is that of Glycerophosphodiester phosphodiesterase (glpQ) from Haemophilus influenzae (strain ATCC 51907 / DSM 11121 / KW20 / Rd).